A 568-amino-acid polypeptide reads, in one-letter code: Urease subunit alpha (568 aa).

Residues 131-568 (GGIDTHIHFI…LPMAQRYFLF (438 aa)) enclose the Urease domain. Ni(2+)-binding residues include His-136, His-138, and Lys-219. An N6-carboxylysine modification is found at Lys-219. A substrate-binding site is contributed by His-221. Ni(2+) contacts are provided by His-248 and His-274. Catalysis depends on His-322, which acts as the Proton donor. Ni(2+) is bound at residue Asp-362.

This sequence belongs to the metallo-dependent hydrolases superfamily. Urease alpha subunit family. As to quaternary structure, heterotrimer of UreA (gamma), UreB (beta) and UreC (alpha) subunits. Three heterotrimers associate to form the active enzyme. Requires Ni cation as cofactor. In terms of processing, carboxylation allows a single lysine to coordinate two nickel ions.

The protein resides in the cytoplasm. It carries out the reaction urea + 2 H2O + H(+) = hydrogencarbonate + 2 NH4(+). It participates in nitrogen metabolism; urea degradation; CO(2) and NH(3) from urea (urease route): step 1/1. The sequence is that of Urease subunit alpha from Nostoc sp. (strain PCC 7120 / SAG 25.82 / UTEX 2576).